Consider the following 524-residue polypeptide: tRNA-2-methylthio-N(6)-dimethylallyladenosine synthase (524 aa).

Residues 1–12 (MNTHPSHPDHPA) are compositionally biased toward basic and acidic residues. The tract at residues 1–23 (MNTHPSHPDHPADTLPARGNREG) is disordered. Positions 27–143 (RTYEVRTFGC…LPTLLNRAEH (117 aa)) constitute an MTTase N-terminal domain. [4Fe-4S] cluster is bound by residues Cys36, Cys72, Cys106, Cys180, Cys184, and Cys187. Positions 166–402 (RESAYAGWVS…MALQERICEE (237 aa)) constitute a Radical SAM core domain. The region spanning 405-476 (QKFIGQTVEL…PFFLIADAGV (72 aa)) is the TRAM domain.

Belongs to the methylthiotransferase family. MiaB subfamily. Monomer. Requires [4Fe-4S] cluster as cofactor.

It localises to the cytoplasm. It carries out the reaction N(6)-dimethylallyladenosine(37) in tRNA + (sulfur carrier)-SH + AH2 + 2 S-adenosyl-L-methionine = 2-methylsulfanyl-N(6)-dimethylallyladenosine(37) in tRNA + (sulfur carrier)-H + 5'-deoxyadenosine + L-methionine + A + S-adenosyl-L-homocysteine + 2 H(+). In terms of biological role, catalyzes the methylthiolation of N6-(dimethylallyl)adenosine (i(6)A), leading to the formation of 2-methylthio-N6-(dimethylallyl)adenosine (ms(2)i(6)A) at position 37 in tRNAs that read codons beginning with uridine. This chain is tRNA-2-methylthio-N(6)-dimethylallyladenosine synthase, found in Corynebacterium efficiens (strain DSM 44549 / YS-314 / AJ 12310 / JCM 11189 / NBRC 100395).